Reading from the N-terminus, the 258-residue chain is MKNYLLQIEYFGKNYCGWQRQSHSPSVQEELEKALSKIANQNIEVTCAGRTDTGVHATSQIVNFYSNADRPLSAWQRGVNALLPQDIKILAVQQVDNNFNSRFTAINRTYNYIIYNSATSSPIFAEHCLWENRELDIDKMNQACEYLLGEQDFSSFRSSQCQSNTPFRNIQKAEFIKQGSFIVFEVVGNAFLHHMIRNLVGSLLKVGLGFESPEWIKVVLEAKDRTQAAETAKAHGLYFVGVEYPEFSFKRQIIKLFC.

Asp-52 acts as the Nucleophile in catalysis. Tyr-110 contacts substrate.

The protein belongs to the tRNA pseudouridine synthase TruA family. As to quaternary structure, homodimer.

The enzyme catalyses uridine(38/39/40) in tRNA = pseudouridine(38/39/40) in tRNA. Its function is as follows. Formation of pseudouridine at positions 38, 39 and 40 in the anticodon stem and loop of transfer RNAs. This Francisella tularensis subsp. tularensis (strain FSC 198) protein is tRNA pseudouridine synthase A.